The following is a 348-amino-acid chain: MAPINIVDVKKNYGSVPAVKGINLAVADGEFIVLVGPSGCGKSTLLRMIAGLESITGGRVEIGGRNVNKAEPAERDIAMVFQNYALYPHMTVRGNLEYGLKNRGTARAEIDRRVKEAADILEIGPMLDRKPRELSGGQRQRVAMGRAIVREPAAFLFDEPLSNLDAKLRVQMRVEIRRLQRRLKTTSIYVTHDQLEAMTLADRLVVMNGGLVEQVGTPVEVYDRPASLFVAGFIGSPPMNLVPIEVFHATESGGTLALPEGTDMVGLRPDALLLEKPAEPSIRLNAIVELLEPIGGESHLHVRLGEGQQTIVLTVQGRPDFAESARIDVFARIDQMHPFNSRTGRRTD.

In terms of domain architecture, ABC transporter spans Ile4–Ile234. Gly36–Ser43 contacts ATP.

It belongs to the ABC transporter superfamily. sn-glycerol-3-phosphate importer (TC 3.A.1.1.3) family. In terms of assembly, the complex is composed of two ATP-binding proteins (UgpC), two transmembrane proteins (UgpA and UgpE) and a solute-binding protein (UgpB).

It localises to the cell inner membrane. It carries out the reaction sn-glycerol 3-phosphate(out) + ATP + H2O = sn-glycerol 3-phosphate(in) + ADP + phosphate + H(+). Its function is as follows. Part of the ABC transporter complex UgpBAEC involved in sn-glycerol-3-phosphate (G3P) import. Responsible for energy coupling to the transport system. This is sn-glycerol-3-phosphate import ATP-binding protein UgpC 3 from Rhizobium etli (strain ATCC 51251 / DSM 11541 / JCM 21823 / NBRC 15573 / CFN 42).